Reading from the N-terminus, the 367-residue chain is Probable butyrate kinase (367 aa).

The protein belongs to the acetokinase family.

It is found in the cytoplasm. The enzyme catalyses butanoate + ATP = butanoyl phosphate + ADP. The sequence is that of Probable butyrate kinase from Bacillus cereus (strain ATCC 10987 / NRS 248).